Reading from the N-terminus, the 285-residue chain is Golgi to ER traffic protein 2 (285 aa).

Residues methionine 1–arginine 10 show a composition bias toward basic and acidic residues. The disordered stretch occupies residues methionine 1–aspartate 71. Position 2 is an N-acetylserine (serine 2). The Cytoplasmic segment spans residues serine 2–arginine 148. Over residues arginine 11–lysine 20 the composition is skewed to basic residues. Over residues glycine 24–asparagine 42 the composition is skewed to polar residues. The residue at position 45 (serine 45) is a Phosphoserine. The span at alanine 49–serine 60 shows a compositional bias: low complexity. Residues leucine 149 to isoleucine 169 form a helical membrane-spanning segment. Residues threonine 170 to asparagine 196 lie on the Lumenal side of the membrane. N-linked (GlcNAc...) asparagine glycosylation is found at asparagine 173 and asparagine 196. Residues phenylalanine 197–leucine 216 form a helical membrane-spanning segment. Residues lysine 217–aspartate 263 lie on the Cytoplasmic side of the membrane. The helical transmembrane segment at leucine 264–tyrosine 284 threads the bilayer. A topological domain (lumenal) is located at residue leucine 285.

Belongs to the GET2 family. Component of the Golgi to ER traffic (GET) complex, which is composed of GET1, GET2 and GET3. Within the complex, GET1 and GET2 form a heterotetramer which is stabilized by phosphatidylinositol binding and which binds to the GET3 homodimer.

Its subcellular location is the endoplasmic reticulum membrane. The protein localises to the golgi apparatus membrane. Its function is as follows. Required for the post-translational delivery of tail-anchored (TA) proteins to the endoplasmic reticulum. Together with GET1, acts as a membrane receptor for soluble GET3, which recognizes and selectively binds the transmembrane domain of TA proteins in the cytosol. The GET complex cooperates with the HDEL receptor ERD2 to mediate the ATP-dependent retrieval of resident ER proteins that contain a C-terminal H-D-E-L retention signal from the Golgi to the ER. Involved in DNA replication and DNA damage response and also in cell wall function. The polypeptide is Golgi to ER traffic protein 2 (Saccharomyces cerevisiae (strain YJM789) (Baker's yeast)).